The primary structure comprises 90 residues: Small ribosomal subunit protein uS15 (90 aa).

The protein belongs to the universal ribosomal protein uS15 family. As to quaternary structure, part of the 30S ribosomal subunit. Forms a bridge to the 50S subunit in the 70S ribosome, contacting the 23S rRNA.

One of the primary rRNA binding proteins, it binds directly to 16S rRNA where it helps nucleate assembly of the platform of the 30S subunit by binding and bridging several RNA helices of the 16S rRNA. Functionally, forms an intersubunit bridge (bridge B4) with the 23S rRNA of the 50S subunit in the ribosome. The polypeptide is Small ribosomal subunit protein uS15 (Helicobacter pylori (strain J99 / ATCC 700824) (Campylobacter pylori J99)).